A 360-amino-acid chain; its full sequence is Chorismate synthase (360 aa).

Arg46 contacts NADP(+). FMN contacts are provided by residues 122-124, Gly282, 297-301, and Arg324; these read RAS and KPTPS.

It belongs to the chorismate synthase family. It depends on FMNH2 as a cofactor.

It carries out the reaction 5-O-(1-carboxyvinyl)-3-phosphoshikimate = chorismate + phosphate. It participates in metabolic intermediate biosynthesis; chorismate biosynthesis; chorismate from D-erythrose 4-phosphate and phosphoenolpyruvate: step 7/7. Its function is as follows. Catalyzes the anti-1,4-elimination of the C-3 phosphate and the C-6 proR hydrogen from 5-enolpyruvylshikimate-3-phosphate (EPSP) to yield chorismate, which is the branch point compound that serves as the starting substrate for the three terminal pathways of aromatic amino acid biosynthesis. This reaction introduces a second double bond into the aromatic ring system. The protein is Chorismate synthase of Archaeoglobus fulgidus (strain ATCC 49558 / DSM 4304 / JCM 9628 / NBRC 100126 / VC-16).